Here is a 258-residue protein sequence, read N- to C-terminus: MKTLVIASLSGGQGKTTTAFFLGKLLSQSAKVLFIDADPQSNLTFFLGHEVEPSAPTLLELIKDMVEPADAVYSLANSNQFLIPSDDGLSNAQEYLASSGMGAVVLKARLKPLSEYFDYCIIDSPPARTQISIATIGAADQLLIPAEASTKGVNSLIRTLEIVQSLEKLGAFTGSILGVIPFRDKWFGLSQSKDSAGAIAAMKEVAPQLRIFPSILESERYKQALNQGILLSELGYPDLEKPFEGVKEALGIKQLVQI.

Gly11, Gly12, Gln13, Gly14, Lys15, Thr16, Thr17, Gln40, Glu147, Lys151, Phe182, Arg183, Leu216, Glu217, Ser218, and Tyr221 together coordinate ATP. Thr16 serves as a coordination point for Mg(2+).

It belongs to the ParA family. McdA subfamily. In terms of assembly, homodimerizes in the presence of ATP, making extra nucleotide contacts than with ADP or AMP-PNP. Each subunit binds 1 ATP molecule; Glu-147, Lys-151 and Arg-183 cross the dimer interface to contact ATP in the other subunit, while Phe-182, Arg-183 and Tyr-221 stack with the adenine base in their own subunit. Forms a complex with McdB.

It localises to the cytoplasm. The protein resides in the nucleoid. It catalyses the reaction ATP + H2O = ADP + phosphate + H(+). Its function is as follows. McdA and McdB together mediate carboxysome (Cb) spacing, size, ultrastructure and probably inheritance in the cell, together they prevent Cb aggregation. McdA is an ATPase that forms dynamic gradients on the nucleoid in response to adapter protein McdB, which associates with carboxysomes. The interplay between McdA gradients on the nucleoid and McdB-bound carboxysomes result in the equal spacing of Cbs along the cell length. Binds DNA saturably and strongly in the presence of Mg(2+)ATP; without ATP, DNA-binding is very poor (tested with a mutant that should not be able to hydrolyze ATP, Asp-38-Ala). Decreasing the NaCl concentration increases DNA binding. In terms of biological role, incorrect positioning (aggregation) of carboxysomes results in reduced CO(2) fixation by encapsulated ribulose-1,5-bisphosphate carboxylase (RuBisCO, cbbL/cbbS), which leads to slower growth. This chain is Maintenance of carboxysome distribution protein A, found in Gloeothece citriformis (strain PCC 7424) (Cyanothece sp. (strain PCC 7424)).